The primary structure comprises 574 residues: Sulfate adenylyltransferase (574 aa).

The N-terminal stretch occupies residues 1–169; the sequence is MANSPHGGVL…IEAVNKLNHY (169 aa). The segment at 170–394 is catalytic; sequence DYVALRYSPA…LRESSPPRAT (225 aa). Gln197 is a binding site for sulfate. Residues 197-200 and 291-294 contribute to the ATP site; these read QTRN and GRDH. Residues Thr198, Arg199, and Asn200 contribute to the active site. Arg199 serves as a coordination point for sulfate. Sulfate is bound at residue Ala295. Val333 contributes to the ATP binding site. Residues 395-574 are allosteric regulation domain; adenylyl-sulfate kinase-like; sequence QGFTIFLTGY…LESEGYFDRL (180 aa). 3'-phosphoadenylyl sulfate is bound by residues 434–437, Arg451, 477–478, and Arg516; these read DTVR and IA.

This sequence in the N-terminal section; belongs to the sulfate adenylyltransferase family. In the C-terminal section; belongs to the APS kinase family. In terms of assembly, homohexamer. Dimer of trimers.

It is found in the cytoplasm. The catalysed reaction is sulfate + ATP + H(+) = adenosine 5'-phosphosulfate + diphosphate. The protein operates within sulfur metabolism; hydrogen sulfide biosynthesis; sulfite from sulfate: step 1/3. Allosterically inhibited by 3'-phosphoadenosine 5'-phosphosulfate (PAPS). Catalyzes the first intracellular reaction of sulfate assimilation, forming adenosine-5'-phosphosulfate (APS) from inorganic sulfate and ATP. Plays an important role in sulfate activation as a component of the biosynthesis pathway of sulfur-containing amino acids. The chain is Sulfate adenylyltransferase from Aspergillus terreus (strain NIH 2624 / FGSC A1156).